Here is a 402-residue protein sequence, read N- to C-terminus: RNA-binding protein 42 (402 aa).

The interval 240 to 275 (ETASDDSVIGPSMPEPEPVHVEPVDTSTEDKKKGKQ) is disordered. The span at 256 to 275 (EPVHVEPVDTSTEDKKKGKQ) shows a compositional bias: basic and acidic residues. Residues 303–381 (FRIFCGDLGN…RPIKLRKSAW (79 aa)) form the RRM domain.

The protein belongs to the RRM RBM42 family.

The protein resides in the nucleus. It localises to the cytoplasm. Its function is as follows. May bind RNA. This is RNA-binding protein 42 (rbm42) from Danio rerio (Zebrafish).